The primary structure comprises 256 residues: Cell division protein FtsQ (256 aa).

Residues 1–23 (MIKAVKMNTSFDKEKVRKHLPGA) are Cytoplasmic-facing. Residues 24-44 (IFLSLVVITSLWLVISTISWM) form a helical membrane-spanning segment. Residues 45 to 256 (TDEDRLPLSH…SDDVENKEEN (212 aa)) lie on the Periplasmic side of the membrane. Positions 50-120 (LPLSHMIIQG…ETIKVFVVEH (71 aa)) constitute a POTRA domain.

The protein belongs to the FtsQ/DivIB family. FtsQ subfamily. Part of a complex composed of FtsB, FtsL and FtsQ.

Its subcellular location is the cell inner membrane. In terms of biological role, essential cell division protein. May link together the upstream cell division proteins, which are predominantly cytoplasmic, with the downstream cell division proteins, which are predominantly periplasmic. May control correct divisome assembly. In Aliivibrio fischeri (strain ATCC 700601 / ES114) (Vibrio fischeri), this protein is Cell division protein FtsQ.